Here is a 145-residue protein sequence, read N- to C-terminus: Small ribosomal subunit protein bS6 (145 aa).

Over residues 113 to 132 (ENMKKNERKAPKEPVKKDEE) the composition is skewed to basic and acidic residues. Residues 113–145 (ENMKKNERKAPKEPVKKDEEENKESEEEITSEE) form a disordered region. Over residues 133–145 (ENKESEEEITSEE) the composition is skewed to acidic residues.

Belongs to the bacterial ribosomal protein bS6 family.

In terms of biological role, binds together with bS18 to 16S ribosomal RNA. In Campylobacter hominis (strain ATCC BAA-381 / DSM 21671 / CCUG 45161 / LMG 19568 / NCTC 13146 / CH001A), this protein is Small ribosomal subunit protein bS6.